We begin with the raw amino-acid sequence, 1342 residues long: DNA-directed RNA polymerase subunit beta (1342 aa).

The protein belongs to the RNA polymerase beta chain family. The RNAP catalytic core consists of 2 alpha, 1 beta, 1 beta' and 1 omega subunit. When a sigma factor is associated with the core the holoenzyme is formed, which can initiate transcription.

It carries out the reaction RNA(n) + a ribonucleoside 5'-triphosphate = RNA(n+1) + diphosphate. In terms of biological role, DNA-dependent RNA polymerase catalyzes the transcription of DNA into RNA using the four ribonucleoside triphosphates as substrates. This Salmonella agona (strain SL483) protein is DNA-directed RNA polymerase subunit beta.